The following is an 89-amino-acid chain: Large ribosomal subunit protein bL27 (89 aa).

The interval 1–21 is disordered; sequence MAHKKAGGSSRNGRDSESKRL.

It belongs to the bacterial ribosomal protein bL27 family.

The polypeptide is Large ribosomal subunit protein bL27 (Bartonella quintana (strain Toulouse) (Rochalimaea quintana)).